A 319-amino-acid chain; its full sequence is Heavy metal-associated isoprenylated plant protein 9 (319 aa).

2 stretches are compositionally biased toward basic and acidic residues: residues 1-11 (MGEEVKPEAKE) and 24-45 (EEKK…KPKE). Residues 1 to 57 (MGEEVKPEAKEAASAPQAVPAEEEEKKKDVAEEKKVAAEEEKPKEEEEPQPPPPPPP) form a disordered region. Residues 21 to 48 (AEEEEKKKDVAEEKKVAAEEEKPKEEEE) are a coiled coil. HMA domains follow at residues 55-118 (PPPF…KRMA) and 144-208 (LTTV…KQAR). A metal cation is bound by residues C66, C69, C155, and C158. Residues 207 to 282 (ARIVPQPDPE…RDNEMTAMAQ (76 aa)) form a disordered region. The span at 224 to 254 (QEEKKEESGEGNEKPPETGEEKEEEKKKEGE) shows a compositional bias: basic and acidic residues. The segment covering 255 to 268 (ENGEEGGGEEAAAT) has biased composition (acidic residues). C316 carries the post-translational modification Cysteine methyl ester. A lipid anchor (S-farnesyl cysteine) is attached at C316. A propeptide spans 317–319 (CIS) (removed in mature form).

It belongs to the HIPP family.

Functionally, heavy-metal-binding protein. The sequence is that of Heavy metal-associated isoprenylated plant protein 9 from Arabidopsis thaliana (Mouse-ear cress).